The chain runs to 302 residues: Methionyl-tRNA formyltransferase (302 aa).

107 to 110 (SLLP) serves as a coordination point for (6S)-5,6,7,8-tetrahydrofolate.

The protein belongs to the Fmt family.

It catalyses the reaction L-methionyl-tRNA(fMet) + (6R)-10-formyltetrahydrofolate = N-formyl-L-methionyl-tRNA(fMet) + (6S)-5,6,7,8-tetrahydrofolate + H(+). Its function is as follows. Attaches a formyl group to the free amino group of methionyl-tRNA(fMet). The formyl group appears to play a dual role in the initiator identity of N-formylmethionyl-tRNA by promoting its recognition by IF2 and preventing the misappropriation of this tRNA by the elongation apparatus. The protein is Methionyl-tRNA formyltransferase of Leifsonia xyli subsp. xyli (strain CTCB07).